A 490-amino-acid chain; its full sequence is 2,3-bisphosphoglycerate-independent phosphoglycerate mutase (490 aa).

Positions 9 and 59 each coordinate Mn(2+). S59 (phosphoserine intermediate) is an active-site residue. Substrate contacts are provided by residues H116, 145–146 (RD), R175, R181, 246–249 (RSDR), and K319. 5 residues coordinate Mn(2+): D385, H389, D426, H427, and H444.

It belongs to the BPG-independent phosphoglycerate mutase family. Monomer. Mn(2+) serves as cofactor.

The catalysed reaction is (2R)-2-phosphoglycerate = (2R)-3-phosphoglycerate. Its pathway is carbohydrate degradation; glycolysis; pyruvate from D-glyceraldehyde 3-phosphate: step 3/5. Catalyzes the interconversion of 2-phosphoglycerate and 3-phosphoglycerate. In Helicobacter hepaticus (strain ATCC 51449 / 3B1), this protein is 2,3-bisphosphoglycerate-independent phosphoglycerate mutase.